We begin with the raw amino-acid sequence, 229 residues long: MSKNSVIIVAAGKGKRMNSSISKQFLQIKNKPILYYTLSKFSTHESIDEIVLVTLEDKIEVCSDIIDKYNINKVSKIVPGGKERQDSVYNGLKGVSKDCEVVLIHDAARPFVTSDIIENGIRYTNQYGAAACGVIPKDTIKIKNEKGFAIDTPNREDLFIVQTPQCFNYNIILSCHEKLKKHNKKVTDDTMVLENYGKSVYLYEGSYSNIKITTPEDLILGEQILEKLT.

This sequence belongs to the IspD/TarI cytidylyltransferase family. IspD subfamily.

The enzyme catalyses 2-C-methyl-D-erythritol 4-phosphate + CTP + H(+) = 4-CDP-2-C-methyl-D-erythritol + diphosphate. The protein operates within isoprenoid biosynthesis; isopentenyl diphosphate biosynthesis via DXP pathway; isopentenyl diphosphate from 1-deoxy-D-xylulose 5-phosphate: step 2/6. Its function is as follows. Catalyzes the formation of 4-diphosphocytidyl-2-C-methyl-D-erythritol from CTP and 2-C-methyl-D-erythritol 4-phosphate (MEP). This Clostridium botulinum (strain ATCC 19397 / Type A) protein is 2-C-methyl-D-erythritol 4-phosphate cytidylyltransferase.